The following is a 151-amino-acid chain: 3-hydroxyacyl-[acyl-carrier-protein] dehydratase FabZ (151 aa).

Residue H56 is part of the active site.

The protein belongs to the thioester dehydratase family. FabZ subfamily.

The protein localises to the cytoplasm. The enzyme catalyses a (3R)-hydroxyacyl-[ACP] = a (2E)-enoyl-[ACP] + H2O. Its function is as follows. Involved in unsaturated fatty acids biosynthesis. Catalyzes the dehydration of short chain beta-hydroxyacyl-ACPs and long chain saturated and unsaturated beta-hydroxyacyl-ACPs. The protein is 3-hydroxyacyl-[acyl-carrier-protein] dehydratase FabZ of Nitrobacter hamburgensis (strain DSM 10229 / NCIMB 13809 / X14).